The chain runs to 465 residues: Ribosomal oxygenase 2 (465 aa).

The JmjC domain occupies 139–271; the sequence is QPQRFKDELW…NSWGDYLLDS (133 aa). Fe cation is bound by residues His179, Asp181, and His240. Ser309 bears the Phosphoserine mark.

This sequence belongs to the ROX family. MINA53 subfamily. The cofactor is Fe(2+).

It localises to the nucleus. Its subcellular location is the nucleolus. The enzyme catalyses L-histidyl-[ribosomal protein uL15] + 2-oxoglutarate + O2 = (3S)-3-hydroxy-L-histidyl-[ribosomal protein uL15] + succinate + CO2. The catalysed reaction is L-histidyl-[protein] + 2-oxoglutarate + O2 = (3S)-3-hydroxy-L-histidyl-[protein] + succinate + CO2. Its function is as follows. Oxygenase that can act as both a histone lysine demethylase and a ribosomal histidine hydroxylase. Is involved in the demethylation of trimethylated 'Lys-9' on histone H3 (H3K9me3), leading to an increase in ribosomal RNA expression. Also catalyzes the hydroxylation of 60S ribosomal protein L27a on 'His-39'. May play an important role in cell growth and survival. May be involved in ribosome biogenesis, most likely during the assembly process of pre-ribosomal particles. This is Ribosomal oxygenase 2 from Rattus norvegicus (Rat).